A 313-amino-acid chain; its full sequence is Ribosomal RNA small subunit methyltransferase H (313 aa).

Residues 35–37, Asp-55, Phe-80, Asp-102, and Gln-109 contribute to the S-adenosyl-L-methionine site; that span reads GGH.

Belongs to the methyltransferase superfamily. RsmH family.

It localises to the cytoplasm. The enzyme catalyses cytidine(1402) in 16S rRNA + S-adenosyl-L-methionine = N(4)-methylcytidine(1402) in 16S rRNA + S-adenosyl-L-homocysteine + H(+). Its function is as follows. Specifically methylates the N4 position of cytidine in position 1402 (C1402) of 16S rRNA. The sequence is that of Ribosomal RNA small subunit methyltransferase H from Shewanella sp. (strain MR-4).